A 127-amino-acid chain; its full sequence is Small ribosomal subunit protein eS8 (127 aa).

Positions 1-31 are disordered; it reads MTIFQGKSGKKATGGSLKQSRKKRRFELGRE.

Belongs to the eukaryotic ribosomal protein eS8 family. Part of the 30S ribosomal subunit.

This chain is Small ribosomal subunit protein eS8 (rps8e), found in Thermoplasma acidophilum (strain ATCC 25905 / DSM 1728 / JCM 9062 / NBRC 15155 / AMRC-C165).